The sequence spans 332 residues: RNA polymerase principal sigma factor HrdD (332 aa).

Over residues 1 to 11 (MATRAVARRKS) the composition is skewed to basic residues. The interval 1–25 (MATRAVARRKSAAGETSGSATSVRA) is disordered. Positions 13–22 (AGETSGSATS) are enriched in low complexity. The Polymerase core binding signature appears at 124-137 (DLIQEGNAGLVRAV). A DNA-binding region (H-T-H motif) is located at residues 294 to 313 (LTEVGKEHGLTRERIRQIEK).

Belongs to the sigma-70 factor family. In terms of assembly, interacts transiently with the RNA polymerase catalytic core.

Functionally, sigma factors are initiation factors that promote the attachment of RNA polymerase to specific initiation sites and are then released. This is RNA polymerase principal sigma factor HrdD (hrdD) from Streptomyces coelicolor (strain ATCC BAA-471 / A3(2) / M145).